The following is a 531-amino-acid chain: Arginine--tRNA ligase (531 aa).

The 'HIGH' region motif lies at 113 to 123 (ANPTGPLHIGH).

This sequence belongs to the class-I aminoacyl-tRNA synthetase family. As to quaternary structure, monomer.

The protein localises to the cytoplasm. It catalyses the reaction tRNA(Arg) + L-arginine + ATP = L-arginyl-tRNA(Arg) + AMP + diphosphate. The chain is Arginine--tRNA ligase from Campylobacter fetus subsp. fetus (strain 82-40).